The primary structure comprises 907 residues: Whirlin (907 aa).

The PDZ 1 domain maps to Leu140–Arg223. The interval Ser243–Asp264 is disordered. The PDZ 2 domain maps to Lys279–Arg361. Disordered stretches follow at residues Ser502–Ser540, Ser565–Arg663, Gln684–Thr717, and Pro742–Thr815. Over residues Ser521 to Ser540 the composition is skewed to low complexity. Over residues Pro609–Asn626 the composition is skewed to polar residues. Over residues Ser628–Ala642 the composition is skewed to low complexity. Ser685 carries the post-translational modification Phosphoserine. Polar residues predominate over residues Gln743–Glu762. Positions Ser789–Thr800 are enriched in basic and acidic residues. The PDZ 3 domain occupies Leu816–Leu899.

As to quaternary structure, forms homooligomers. Interacts (via C-terminal PDZ domain) with MYO15A; this interaction is necessary for localization of WHRN to stereocilia tips. Interacts (via C-terminal PDZ domain) with MPP1/p55. Interacts with LRRC4C/NGL1. Interacts with MYO7A. Interacts with RPGR. Interacts with EPS8. Interacts with CASK. Interacts with CIB2. Component of USH2 complex, composed of ADGRV1, PDZD7, USH2A and WHRN. Interacts (via PDZ domains) with PDZD7; the interaction is direct. Interacts (via N-terminal PDZ domain) with USH2A (via cytoplasmic region). Interacts with ADGRV1/MASS1 (via cytoplasmic region).

It is found in the cytoplasm. It localises to the cell projection. The protein resides in the stereocilium. The protein localises to the growth cone. Its subcellular location is the photoreceptor inner segment. It is found in the synapse. Involved in hearing and vision as member of the USH2 complex. Necessary for elongation and maintenance of inner and outer hair cell stereocilia in the organ of Corti in the inner ear. Involved in the maintenance of the hair bundle ankle region, which connects stereocilia in cochlear hair cells of the inner ear. In retina photoreceptors, required for the maintenance of periciliary membrane complex that seems to play a role in regulating intracellular protein transport. This chain is Whirlin, found in Homo sapiens (Human).